The sequence spans 296 residues: Sulfotransferase 6B1 (296 aa).

The active-site Proton acceptor is the His-112. Residues Arg-134, Ser-142, Tyr-197, and 253–255 each bind 3'-phosphoadenylyl sulfate; that span reads RKG.

Belongs to the sulfotransferase 1 family.

It localises to the cytoplasm. Its subcellular location is the cytosol. It catalyses the reaction thyroxine + 3'-phosphoadenylyl sulfate = thyroxine sulfate + adenosine 3',5'-bisphosphate + H(+). Strongly inhibited by the divalent metal cations Fe(2+), Hg(2+), Co(2+), Zn(2+), Cu(2+) and Cd(2+). Its function is as follows. Sulfotransferase that utilizes 3'-phospho-5'-adenylyl sulfate (PAPS) as sulfonate donor to catalyze the sulfate conjugation of a variety of xenobiotic and endogenous compounds, including dopamine, T3 (triiodo-L-thyronine), T4 (thyroxine), flavonoids, isoflavonoids, and other phenolic compounds. The chain is Sulfotransferase 6B1 from Danio rerio (Zebrafish).